The chain runs to 1501 residues: MSNIKSTQDSSHNAVARSSSASFAASEESFTGITHDKDEQSDTPADKLTKMLTGPARDTASQISATVSEMAPDVVSKVESFADALSRHTTRSGAFNMDSDSDDGFDAHAIFESFVRDADEQGIHIRKAGVTIEDVSAKGVDASALEGATFGNILCLPLTIFKGIKAKRHQKMRQIISNVNALAEAGEMILVLGRPGAGCSSFLKVTAGEIDQFAGGVSGEVAYDGIPQEEMMKRYKADVIYNGELDVHFPYLTVKQTLDFAIACKTPALRVNNVSKKEYIASRRDLYATIFGLRHTYNTKVGNDFVRGVSGGERKRVSIAEALAAKGSIYCWDNATRGLDASTALEYAKAIRIMTNLLKSTAFVTIYQASENIYETFDKVTVLYSGKQIYFGLIHEAKPYFAKMGYLCPPRQATAEFLTALTDPNGFHLIKPGYENKVPRTAEEFETYWLNSPEFAQMKKDIAAYKEKVNTEKTKEVYDESMAQEKSKYTRKKSYYTVSYWEQVKLCTQRGFQRIYGNKSYTVINVCSAIIQSFITGSLFYNTPSSTSGAFSRGGVLYFALLYYSLMGLANISFEHRPILQKHKGYSLYHPSAEAIGSTLASFPFRMIGLTCFFIILFFLSGLHRTAGSFFTIYLFLTMCSEAINGLFEMVSSVCDTLSQANSISGILMMSISMYSTYMIQLPSMHPWFKWISYVLPIRYAFESMLNAEFHGRHMDCANTLVPSGGDYDNLSDDYKVCAFVGSKPGQSYVLGDDYLKNQFQYVYKHTWRNFGILWCFLLGYVVLKVIFTEYKRPVKGGGDALIFKKGSKRFIAHADEESPDNVNDIDAKEQFSSESSGANDEVFDDLEAKGVFIWKDVCFTIPYEGGKRMLLDNVSGYCIPGTMTALMGESGAGKTTLLNTLAQRNVGIITGDMLVNGRPIDASFERRTGYVQQQDIHIAELTVRESLQFSARMRRPQHLPDSEKMDYVEKIIRVLGMEEYAEALVGEVGCGLNVEQRKKLSIGVELVAKPDLLLFLDEPTSGLDSQSSWAIIQLLRKLSKAGQSILCTIHQPSATLFEEFDRLLLLRKGGQTVYFGDIGKNSATILNYFERNGARKCDSSENPAEYILEAIGAGATASVKEDWHEKWLNSVEFEQTKEKVQDLINDLSKQETKSEVGDKPSKYATSYAYQFRYVLIRTSTSFWRSLNYIMSKMMLMLVGGLYIGFTFFNVGKSYVGLQNAMFAAFISIILSAPAMNQIQGRAIASRELFEVRESQSNMFHWSLVLITQYLSELPYHLFFSTIFFVSSYFPLRIFFEASRSAVYFLNYCIMFQLYYVGLGLMILYMSPNLPSANVILGLCLSFMLSFCGVTQPVSLMPGFWTFMWKASPYTYFVQNLVGIMLHKKPVVCKKKELNYFNPPNGSTCGEYMKPFLEKATGYIENPDATSDCAYCIYEVGDNYLTHISSKYSYLWRNFGIFWIYIFFNIIAMVCVYYLFHVRQSSFLSPVSILNKIKNIRKKKQ.

A compositionally biased stretch (polar residues) spans Met1 to Arg17. The tract at residues Met1–Ala56 is disordered. Position 2 is an N-acetylserine (Ser2). Positions Ser18 to Phe30 are enriched in low complexity. A phosphoserine mark is found at Ser26 and Ser29. Over residues Thr34–Thr49 the composition is skewed to basic and acidic residues. Phosphoserine is present on residues Ser64, Ser80, and Ser86. In terms of domain architecture, ABC transporter 1 spans Phe161–Pro410. N-linked (GlcNAc...) asparagine glycosylation is found at Asn273, Asn334, and Asn518. 5 consecutive transmembrane segments (helical) span residues Tyr521–Tyr541, Gly554–Phe574, Leu600–Leu620, Gly628–Phe648, and Ile664–Ile680. An N-linked (GlcNAc...) asparagine glycan is attached at Asn730. Residues Phe771–Thr789 form a helical membrane-spanning segment. The region spanning Phe853–Ala1095 is the ABC transporter 2 domain. N-linked (GlcNAc...) asparagine glycosylation is present at Asn874. Gly889–Thr896 serves as a coordination point for ATP. Thr1153 is subject to Phosphothreonine. Transmembrane regions (helical) follow at residues Ile1190–Gly1212, Val1216–Met1236, His1277–Phe1296, and Ala1333–Gln1352. Residue Asn1401 is glycosylated (N-linked (GlcNAc...) asparagine). A helical membrane pass occupies residues Phe1455–Leu1475.

The protein belongs to the ABC transporter superfamily. ABCG family. PDR (TC 3.A.1.205) subfamily.

The protein resides in the membrane. Functionally, could be an ATP-dependent permease. Confers hyper-resistance to the mutagens 4-nitroquinoline-N-oxide (4-NQO) and triaziquone, as well as to the chemicals sulphomethuron methyl phenanthroline when present in multiple copies. Exhibits nucleoside triphosphatase activity. This chain is Protein SNQ2 (SNQ2), found in Saccharomyces cerevisiae (strain ATCC 204508 / S288c) (Baker's yeast).